The primary structure comprises 83 residues: Small ribosomal subunit protein bS16 (83 aa).

The protein belongs to the bacterial ribosomal protein bS16 family.

This chain is Small ribosomal subunit protein bS16, found in Shewanella denitrificans (strain OS217 / ATCC BAA-1090 / DSM 15013).